Consider the following 70-residue polypeptide: MKKDIHPNYVEFNATCSCGNVVTTRSTIGKDIHLDVCSACHPFYTGKQKAAETGGRVDKFNKRFAAIGKK.

Zn(2+)-binding residues include Cys16, Cys18, Cys37, and Cys40.

It belongs to the bacterial ribosomal protein bL31 family. Type A subfamily. Part of the 50S ribosomal subunit. Requires Zn(2+) as cofactor.

Functionally, binds the 23S rRNA. In Colwellia psychrerythraea (strain 34H / ATCC BAA-681) (Vibrio psychroerythus), this protein is Large ribosomal subunit protein bL31.